Consider the following 219-residue polypeptide: Leukocyte surface antigen CD53 (219 aa).

The Cytoplasmic segment spans residues 1 to 11 (MGMSSLKLLKY). The chain crosses the membrane as a helical span at residues 12 to 32 (VLFIFNLLFWVCGCCILGFGI). The Extracellular segment spans residues 33 to 54 (YFLVQNTYGVLFRNLPFLTLGN). The helical transmembrane segment at 55–69 (ILVIVGSIIMVVAFL) threads the bilayer. At 70–80 (GCMGSIKENKC) the chain is on the cytoplasmic side. A helical membrane pass occupies residues 81-106 (LLMSFFVLLLIILLAEVTIAILLFVY). Topologically, residues 107–181 (EQKLNTLVAE…NKAKSWFHSN (75 aa)) are extracellular. N-linked (GlcNAc...) asparagine glycosylation is found at N119, N129, and N148. The helical transmembrane segment at 182–206 (FLYIGIITICVCVIQVLGMSFALTL) threads the bilayer. Over 207–219 (NCQIDKTSQALGL) the chain is Cytoplasmic.

It belongs to the tetraspanin (TM4SF) family. Interacts with SCIMP. Interacts with CD45/PTPRC. Interacts with IL7R. Interacts with RBL2 and PPP2CA.

The protein resides in the cell membrane. The protein localises to the cell junction. It localises to the membrane. Its function is as follows. Structural component of specialized membrane microdomains known as tetraspanin-enriched microdomains (TERMs), which act as platforms for receptor clustering and signaling. Participates thereby in diverse biological functions such as cell signal transduction, adhesion, migration and protein trafficking. Plays a role in the activation of monocytes and B-cells. Acts as an essential regulator of B-cell development by promoting interleukin-7 receptor/IL7R signaling. Also promotes, in B-cells, the BCR signaling by recruiting PKC to the plasma membrane in order to phosphorylate its substrates. Plays an essential role in lymphocyte homing to lymph nodes by stabilizing L-selectin/SELL cell surface expression. Also mediates metabolic and inflammatory functions in hepatocytes and adipose tissue by promoting TNF-alpha and LPS signaling independent of the immune compartment. Protects hematopoietic stem cell function in response to stress by facilitating DREAM complex activity through association with p130/RBL2 and its phosphatase PP2A. The sequence is that of Leukocyte surface antigen CD53 (Cd53) from Mus musculus (Mouse).